The following is a 229-amino-acid chain: NAD(P)H-quinone oxidoreductase subunit K, chloroplastic (229 aa).

[4Fe-4S] cluster contacts are provided by cysteine 43, cysteine 44, cysteine 108, and cysteine 139.

The protein belongs to the complex I 20 kDa subunit family. In terms of assembly, NDH is composed of at least 16 different subunits, 5 of which are encoded in the nucleus. [4Fe-4S] cluster serves as cofactor.

It is found in the plastid. The protein localises to the chloroplast thylakoid membrane. It carries out the reaction a plastoquinone + NADH + (n+1) H(+)(in) = a plastoquinol + NAD(+) + n H(+)(out). The enzyme catalyses a plastoquinone + NADPH + (n+1) H(+)(in) = a plastoquinol + NADP(+) + n H(+)(out). In terms of biological role, NDH shuttles electrons from NAD(P)H:plastoquinone, via FMN and iron-sulfur (Fe-S) centers, to quinones in the photosynthetic chain and possibly in a chloroplast respiratory chain. The immediate electron acceptor for the enzyme in this species is believed to be plastoquinone. Couples the redox reaction to proton translocation, and thus conserves the redox energy in a proton gradient. The protein is NAD(P)H-quinone oxidoreductase subunit K, chloroplastic of Piper cenocladum (Ant piper).